The chain runs to 370 residues: Cytochrome b (370 aa).

4 consecutive transmembrane segments (helical) span residues 25–45 (FGSM…FLAI), 69–90 (WIMQ…YTHI), 105–125 (WLSG…GYVL), and 170–190 (FFAL…IHIV). 2 residues coordinate heme b: H75 and H89. Residues H174 and H188 each coordinate heme b. A ubiquinone is bound at residue H193. The next 4 helical transmembrane spans lie at 218–238 (YKDM…MSFM), 280–300 (LGGT…PFTH), 312–332 (LTQI…WTAT), and 339–358 (FITI…IINP).

The protein belongs to the cytochrome b family. In terms of assembly, the cytochrome bc1 complex contains 3 respiratory subunits (MT-CYB, CYC1 and UQCRFS1), 2 core proteins (UQCRC1 and UQCRC2) and probably 6 low-molecular weight proteins. Heme b is required as a cofactor.

Its subcellular location is the mitochondrion inner membrane. Its function is as follows. Component of the ubiquinol-cytochrome c reductase complex (complex III or cytochrome b-c1 complex) that is part of the mitochondrial respiratory chain. The b-c1 complex mediates electron transfer from ubiquinol to cytochrome c. Contributes to the generation of a proton gradient across the mitochondrial membrane that is then used for ATP synthesis. The protein is Cytochrome b (MT-CYB) of Micropechis ikaheca (New Guinean small-eyed snake).